The chain runs to 444 residues: uncharacterized protein (444 aa).

This is an uncharacterized protein from Saccharomyces cerevisiae (strain ATCC 204508 / S288c) (Baker's yeast).